Here is a 192-residue protein sequence, read N- to C-terminus: Per os infectivity factor 6 (192 aa).

Residues 154-174 (IAYVFLFFICIVLLSVLAVFF) traverse the membrane as a helical segment.

It localises to the host membrane. Its subcellular location is the virion. It is found in the host cytoplasm. The protein localises to the host nucleus. Per os infectivity factor. This is Per os infectivity factor 6 (AC68) from Autographa californica nuclear polyhedrosis virus (AcMNPV).